The sequence spans 467 residues: Cysteine protease ATG4a (467 aa).

The interval 1–35 (MKALCDRFVPQQCSSSSKSDTHDKSPLVSDSGPSD) is disordered. Residue Cys170 is the Nucleophile of the active site. Catalysis depends on residues Asp364 and His366. The interval 448 to 467 (NYGFADDDSEDEREDDWQML) is disordered. Acidic residues predominate over residues 452–467 (ADDDSEDEREDDWQML).

This sequence belongs to the peptidase C54 family. As to quaternary structure, interacts with ATG8. In terms of tissue distribution, constitutively expressed.

Its subcellular location is the cytoplasm. The catalysed reaction is [protein]-C-terminal L-amino acid-glycyl-phosphatidylethanolamide + H2O = [protein]-C-terminal L-amino acid-glycine + a 1,2-diacyl-sn-glycero-3-phosphoethanolamine. Cysteine protease that plays a key role in autophagy by mediating both proteolytic activation and delipidation of ATG8 family proteins. The protease activity is required for proteolytic activation of ATG8 family proteins: cleaves the C-terminal amino acid of ATG8 proteins to reveal a C-terminal glycine. Exposure of the glycine at the C-terminus is essential for ATG8 proteins conjugation to phosphatidylethanolamine (PE) and insertion to membranes, which is necessary for autophagy. In addition to the protease activity, also mediates delipidation of PE-conjugated ATG8 proteins. The chain is Cysteine protease ATG4a from Arabidopsis thaliana (Mouse-ear cress).